A 186-amino-acid chain; its full sequence is Small ribosomal subunit protein uS5 (186 aa).

In terms of domain architecture, S5 DRBM spans 18–81 (FVDKLVHINR…EAAKRAMIRV (64 aa)).

Belongs to the universal ribosomal protein uS5 family. In terms of assembly, part of the 30S ribosomal subunit. Contacts proteins S4 and S8.

With S4 and S12 plays an important role in translational accuracy. In terms of biological role, located at the back of the 30S subunit body where it stabilizes the conformation of the head with respect to the body. The chain is Small ribosomal subunit protein uS5 from Parvibaculum lavamentivorans (strain DS-1 / DSM 13023 / NCIMB 13966).